Reading from the N-terminus, the 570-residue chain is Pre-mRNA 3'-end-processing factor FIP1 (570 aa).

Over residues 1–10 (MSAEEADKTT) the composition is skewed to basic and acidic residues. The interval 1-107 (MSAEEADKTT…SDDDDDDVRV (107 aa)) is disordered. Positions 16-38 (AGDEEEEWLYGDEGESKETEEEE) are enriched in acidic residues. Over residues 56 to 77 (DAPTTTNNSSDSATPPTTTTTT) the composition is skewed to low complexity. Residues 87–104 (APGEDEDSESDSDDDDDD) are compositionally biased toward acidic residues. T125 carries the post-translational modification Phosphothreonine. The residue at position 247 (S247) is a Phosphoserine. Disordered regions lie at residues 300–328 (RRRH…VQKM), 371–400 (PNFP…YDGR), and 418–570 (GAVN…EAME). Pro residues predominate over residues 371-384 (PNFPPPTGGPPPSL). Basic and acidic residues-rich tracts occupy residues 436 to 462 (YPRR…RDHS) and 476 to 506 (DEER…EERH). Composition is skewed to basic residues over residues 520 to 529 (KSSRSSSRRR) and 538 to 548 (HRRHKHKKSKR). Residues 549–562 (SKEGKEPSEERSAD) show a composition bias toward basic and acidic residues.

The protein belongs to the FIP1 family.

Its subcellular location is the nucleus. Involved in mRNA processing. This chain is Pre-mRNA 3'-end-processing factor FIP1 (fip1l1), found in Danio rerio (Zebrafish).